Here is a 59-residue protein sequence, read N- to C-terminus: Dybowskin-1CDYa (59 aa).

The first 22 residues, 1 to 22, serve as a signal peptide directing secretion; that stretch reads MFTLKKSLLLLFFLGTINFSLC. A propeptide spanning residues 23 to 44 is cleaved from the precursor; sequence EEERNAEEERRDYPEERDVEVE.

Belongs to the frog skin active peptide (FSAP) family. Brevinin subfamily. Expressed by the skin glands.

Its subcellular location is the secreted. Its function is as follows. Antimicrobial peptide. Has activity against the Gram-positive bacterium S.aureus (MIC=6 uM) and the Gram-negative bacterium E.coli (MIC=3 uM). Lacks hemolytic activity against human erythrocytes. The protein is Dybowskin-1CDYa of Rana dybowskii (Dybovsky's frog).